Consider the following 1107-residue polypeptide: RNA-dependent RNA polymerase 1 (1107 aa).

Belongs to the RdRP family.

It carries out the reaction RNA(n) + a ribonucleoside 5'-triphosphate = RNA(n+1) + diphosphate. RNA-dependent direct polymerase involved in antiviral silencing. Required for the production of some small RNAs (mainly 21 and some 22 nucleotides) derived from the crucifer-infecting tobamovirus (TMV-cg). Required for turnip mosaic virus (TuMV) silencing and accumulation of viral siRNAs. Involved in cucumber mosaic virus (CMV) silencing. Required for the biogenesis of viral secondary siRNAs, process that follows the production of primary siRNAs derived from viral RNA replication. Specifically targets the positive-strand of the 3 RNA genomes of CMV and preferentially amplifies the 5'-terminal siRNAs of each viral genomic RNA. Not involved in the production of siRNAs derived from a single-stranded 336-nucleotide satellite RNA of CMV. In Arabidopsis thaliana (Mouse-ear cress), this protein is RNA-dependent RNA polymerase 1 (RDR1).